Consider the following 278-residue polypeptide: ATP synthase subunit delta (278 aa).

The protein belongs to the ATPase delta chain family. As to quaternary structure, F-type ATPases have 2 components, F(1) - the catalytic core - and F(0) - the membrane proton channel. F(1) has five subunits: alpha(3), beta(3), gamma(1), delta(1), epsilon(1). F(0) has three main subunits: a(1), b(2) and c(10-14). The alpha and beta chains form an alternating ring which encloses part of the gamma chain. F(1) is attached to F(0) by a central stalk formed by the gamma and epsilon chains, while a peripheral stalk is formed by the delta and b chains.

It is found in the cell membrane. In terms of biological role, f(1)F(0) ATP synthase produces ATP from ADP in the presence of a proton or sodium gradient. F-type ATPases consist of two structural domains, F(1) containing the extramembraneous catalytic core and F(0) containing the membrane proton channel, linked together by a central stalk and a peripheral stalk. During catalysis, ATP synthesis in the catalytic domain of F(1) is coupled via a rotary mechanism of the central stalk subunits to proton translocation. Functionally, this protein is part of the stalk that links CF(0) to CF(1). It either transmits conformational changes from CF(0) to CF(1) or is implicated in proton conduction. The polypeptide is ATP synthase subunit delta (Bifidobacterium longum (strain DJO10A)).